A 113-amino-acid chain; its full sequence is Neocarzinostatin (113 aa).

Intrachain disulfides connect cysteine 37–cysteine 47 and cysteine 88–cysteine 93.

Belongs to the neocarzinostatin family.

NCS has antibiotic activity (for Gram-positive bacteria) and antitumor activity (for certain mouse tumors). NCS binds non-covalently to a chromophore which is the cytotoxic and mutagenic component of the antibiotic. The chromophore binds to DNA as a weak intercalator and causes single- and double-strand breaks. The protein is Neocarzinostatin (ncsA) of Streptomyces malayensis.